Here is a 182-residue protein sequence, read N- to C-terminus: MEFSVGGVEVVLMRGDITEVEADAIVNAANSYLEHGGGVAGAIVRKGGQVIQEESREWVRKHGPVPVGDVAVTSAGRLKAKYVIHAVGPRCGVEPIEKLAEAVKNALLKAEELGLVSIALPAISTGIFGCPYDAAAEQMATAIREVAPALRSIRRILVVLYGEEAYQKFLEVFKKHLPGGRL.

The region spanning 1 to 177 is the Macro domain; sequence MEFSVGGVEV…KFLEVFKKHL (177 aa).

This is an uncharacterized protein from Pyrobaculum aerophilum (strain ATCC 51768 / DSM 7523 / JCM 9630 / CIP 104966 / NBRC 100827 / IM2).